Consider the following 510-residue polypeptide: 2,3-bisphosphoglycerate-independent phosphoglycerate mutase (510 aa).

The Mn(2+) site is built by Asp12 and Ser62. Ser62 serves as the catalytic Phosphoserine intermediate. Substrate is bound by residues His123, 152–153 (RD), Arg184, Arg190, 257–260 (RADR), and Lys331. Mn(2+)-binding residues include Asp399, His403, Asp440, His441, and His458.

The protein belongs to the BPG-independent phosphoglycerate mutase family. In terms of assembly, monomer. Mn(2+) is required as a cofactor.

It catalyses the reaction (2R)-2-phosphoglycerate = (2R)-3-phosphoglycerate. It participates in carbohydrate degradation; glycolysis; pyruvate from D-glyceraldehyde 3-phosphate: step 3/5. Functionally, catalyzes the interconversion of 2-phosphoglycerate and 3-phosphoglycerate. This Lawsonia intracellularis (strain PHE/MN1-00) protein is 2,3-bisphosphoglycerate-independent phosphoglycerate mutase.